The sequence spans 245 residues: Adapter protein MecA (245 aa).

This sequence belongs to the MecA family. In terms of assembly, homodimer.

In terms of biological role, enables the recognition and targeting of unfolded and aggregated proteins to the ClpC protease or to other proteins involved in proteolysis. This Streptococcus pneumoniae serotype 4 (strain ATCC BAA-334 / TIGR4) protein is Adapter protein MecA.